Consider the following 251-residue polypeptide: Flap endonuclease Xni (251 aa).

Aspartate 104 lines the Mg(2+) pocket. Residues 160–249 form the 5'-3' exonuclease domain; sequence VLPRQLPDYW…IDGNLQQLRL (90 aa). Positions 171, 172, 180, 182, and 185 each coordinate K(+). The interval 184 to 189 is interaction with DNA; that stretch reads GIGPKS.

The protein belongs to the Xni family. It depends on Mg(2+) as a cofactor. Requires K(+) as cofactor.

Has flap endonuclease activity. During DNA replication, flap endonucleases cleave the 5'-overhanging flap structure that is generated by displacement synthesis when DNA polymerase encounters the 5'-end of a downstream Okazaki fragment. The polypeptide is Flap endonuclease Xni (Salmonella typhimurium (strain LT2 / SGSC1412 / ATCC 700720)).